Reading from the N-terminus, the 709-residue chain is Polyribonucleotide nucleotidyltransferase (709 aa).

The Mg(2+) site is built by aspartate 489 and aspartate 495. Positions 556–615 (PKIDMIKIDVDKIKVVIGKGGETIDKIIAETGVKIDIDEEGNVSIFSSDQAAIDRTKDII) constitute a KH domain. The S1 motif domain occupies 625-693 (GEVYHAKVVR…DKGRVDASMK (69 aa)).

Belongs to the polyribonucleotide nucleotidyltransferase family. Requires Mg(2+) as cofactor.

The protein resides in the cytoplasm. The enzyme catalyses RNA(n+1) + phosphate = RNA(n) + a ribonucleoside 5'-diphosphate. In terms of biological role, involved in mRNA degradation. Catalyzes the phosphorolysis of single-stranded polyribonucleotides processively in the 3'- to 5'-direction. This is Polyribonucleotide nucleotidyltransferase from Streptococcus agalactiae serotype III (strain NEM316).